A 161-amino-acid chain; its full sequence is Anther-specific protein LAT52 (161 aa).

Residues 1–17 (MAKAIVLLSALCILALA) form the signal peptide. 3 disulfide bridges follow: Cys35/Cys106, Cys38/Cys147, and Cys59/Cys94. Residue Asn61 is glycosylated (N-linked (GlcNAc...) asparagine).

The protein belongs to the Ole e I family. In terms of tissue distribution, expressed in anthers and pollen.

May play a role during germination or early tube growth. The sequence is that of Anther-specific protein LAT52 (LAT52) from Solanum lycopersicum (Tomato).